Consider the following 112-residue polypeptide: cAMP-regulated phosphoprotein 19 (112 aa).

Met-1 is subject to N-acetylmethionine. Over residues 1–11 the composition is skewed to low complexity; it reads MSAEVPEAASA. The disordered stretch occupies residues 1–49; that stretch reads MSAEVPEAASAEEQKEMEDKVTSPEKAEEAKLKARYPHLGQKPGGSDFL. At Ser-2 the chain carries N-acetylserine. Phosphoserine is present on residues Ser-2 and Ser-23. Residues 12–32 show a composition bias toward basic and acidic residues; it reads EEQKEMEDKVTSPEKAEEAKL. 2 positions are modified to phosphoserine; by GWL: Ser-62 and Ser-104. Residues 73-112 are disordered; the sequence is KNKQLPTAAPDKTEVTGDHIPTPQDLPQRKPSLVASKLAG. Position 104 is a phosphoserine; by PKA (Ser-104). Lys-109 is subject to N6-acetyllysine.

This sequence belongs to the endosulfine family. Interacts (when phosphorylated at Ser-62) with PPP2R2D. Interacts with SNCA. Interacts with PPP2R2A; the interaction is direct and this interaction inhibits PP2A activity. Post-translationally, phosphorylation at Ser-62 by MASTL/GWL during mitosis is essential for interaction with PPP2R2D (PR55-delta) and subsequent inactivation of PP2A. Phosphorylated by PKA.

The protein localises to the cytoplasm. In terms of biological role, protein phosphatase inhibitor that specifically inhibits protein phosphatase 2A (PP2A) during mitosis. Inhibition of PP2A is enhanced when ARPP19 is phosphorylated. When phosphorylated at Ser-62 during mitosis, specifically interacts with PPP2R2D (PR55-delta) and inhibits its activity, leading to inactivation of PP2A, an essential condition to keep cyclin-B1-CDK1 activity high during M phase. May indirectly enhance GAP-43 expression. This chain is cAMP-regulated phosphoprotein 19 (ARPP19), found in Homo sapiens (Human).